Here is a 272-residue protein sequence, read N- to C-terminus: Replication-associated protein A (272 aa).

The CRESS-DNA virus Rep endonuclease domain occupies 11-114 (SHRNVNTFLT…PLAVFERGTF (104 aa)). The short motif at 18-21 (FLTY) is the RCR-1 element. A divalent metal cation-binding residues include Glu-52, His-60, and His-62. An RCR-2 motif is present at residues 60 to 62 (HLH). Residue Tyr-100 is the For DNA cleavage activity of the active site. The RCR-3 motif lies at 100–103 (YILK). Residue Glu-104 coordinates a divalent metal cation. The segment covering 119 to 128 (SSFQGNPSKG) has biased composition (polar residues). The segment at 119–138 (SSFQGNPSKGNSEKKPSKDE) is disordered. Over residues 129–138 (NSEKKPSKDE) the composition is skewed to basic and acidic residues. The tract at residues 175 to 187 (SANKLFPEIQEEF) is oligomerization. The LXCXE motif, interaction with host RBR1 signature appears at 198-202 (LLCNE). Residues 221–230 (MLLQPTCYTL) form a transactivation region. A compositionally biased stretch (polar residues) spans 245–264 (SQQMKEQESRASTSSVQQEL). The interval 245-272 (SQQMKEQESRASTSSVQQELGNLLGPEA) is disordered.

Belongs to the geminiviridae Rep protein family. Homooligomer. Interacts (via LXCXE domain) with host retinoblastoma-related protein 1 (RBR1), and may thereby deregulate the host cell cycle. Part of the C- and V-complexes which are RepA-Rep-DNA complexes involved in the c-sense and v-sense transcription. The cofactor is Mg(2+). Mn(2+) is required as a cofactor.

Its subcellular location is the host nucleus. It is found in the host cytoplasm. Its function is as follows. Implicated in enhancement of V-sense gene expression. Acts a an inhibitor of C-sense gene transcription. In Avena sativa (Oat), this protein is Replication-associated protein A.